The following is a 214-amino-acid chain: DELTA-actitoxin-Aeq1a (214 aa).

Positions 1–19 (MSRLIIVFIVVTMICSATA) are cleaved as a signal peptide. A propeptide spanning residues 20-35 (LPSKKIIDEDEEDEKR) is cleaved from the precursor. Positions 38–47 (DVAGAVIDGA) are plays an important role in the hemolytic activity. Residues 46–65 (GASLSFDILKTVLEALGNVK) form an N-terminal region region. Phosphocholine is bound by residues serine 89, valine 122, serine 140, proline 142, tyrosine 168, tyrosine 172, and tyrosine 173. The segment at 140 to 155 (SVPYDYNWYSNWWNVR) is trp-rich region, which is important for the binding to lipid membrane. The Cell attachment site, crucial for protein stability motif lies at 179–181 (RGD).

Belongs to the actinoporin family. Sea anemone subfamily. Octamer or nonamer in membranes. Monomer in the soluble state.

Its subcellular location is the secreted. The protein resides in the nematocyst. It localises to the target cell membrane. Pore-forming protein that forms cations-selective hydrophilic pores of around 1 nm and causes cardiac stimulation and cytolysis. Pore formation is a multi-step process that involves specific recognition of membrane sphingomyelin (but neither cholesterol nor phosphatidylcholine) using aromatic rich region and adjacent phosphocholine (POC) binding site, firm binding to the membrane (mainly driven by hydrophobic interactions) accompanied by the transfer of the N-terminal region to the lipid-water interface and finally pore formation after oligomerization of monomers. Cytolytic effects include red blood cells hemolysis, platelet aggregation and lysis, cytotoxic and cytostatic effects on fibroblasts. Lethality in mammals has been ascribed to severe vasospasm of coronary vessels, cardiac arrhythmia, and inotropic effects. The polypeptide is DELTA-actitoxin-Aeq1a (Actinia equina (Beadlet anemone)).